Reading from the N-terminus, the 224-residue chain is Deoxyribose-phosphate aldolase (224 aa).

Residue aspartate 92 is the Proton donor/acceptor of the active site. The active-site Schiff-base intermediate with acetaldehyde is lysine 155. The active-site Proton donor/acceptor is the lysine 184.

The protein belongs to the DeoC/FbaB aldolase family. DeoC type 1 subfamily.

The protein resides in the cytoplasm. The catalysed reaction is 2-deoxy-D-ribose 5-phosphate = D-glyceraldehyde 3-phosphate + acetaldehyde. Its pathway is carbohydrate degradation; 2-deoxy-D-ribose 1-phosphate degradation; D-glyceraldehyde 3-phosphate and acetaldehyde from 2-deoxy-alpha-D-ribose 1-phosphate: step 2/2. Its function is as follows. Catalyzes a reversible aldol reaction between acetaldehyde and D-glyceraldehyde 3-phosphate to generate 2-deoxy-D-ribose 5-phosphate. The sequence is that of Deoxyribose-phosphate aldolase from Shouchella clausii (strain KSM-K16) (Alkalihalobacillus clausii).